The primary structure comprises 126 residues: Holo-[acyl-carrier-protein] synthase (126 aa).

Aspartate 8 and glutamate 57 together coordinate Mg(2+).

It belongs to the P-Pant transferase superfamily. AcpS family. The cofactor is Mg(2+).

It is found in the cytoplasm. It catalyses the reaction apo-[ACP] + CoA = holo-[ACP] + adenosine 3',5'-bisphosphate + H(+). Functionally, transfers the 4'-phosphopantetheine moiety from coenzyme A to a Ser of acyl-carrier-protein. In Vibrio cholerae serotype O1 (strain ATCC 39541 / Classical Ogawa 395 / O395), this protein is Holo-[acyl-carrier-protein] synthase.